Here is a 323-residue protein sequence, read N- to C-terminus: tRNA U34 carboxymethyltransferase (323 aa).

Carboxy-S-adenosyl-L-methionine-binding positions include Lys-91, Trp-105, Lys-110, Gly-130, Asp-152–Thr-154, Ile-181–Glu-182, Met-196, Tyr-200, and Arg-315.

It belongs to the class I-like SAM-binding methyltransferase superfamily. CmoB family. In terms of assembly, homotetramer.

The catalysed reaction is carboxy-S-adenosyl-L-methionine + 5-hydroxyuridine(34) in tRNA = 5-carboxymethoxyuridine(34) in tRNA + S-adenosyl-L-homocysteine + H(+). In terms of biological role, catalyzes carboxymethyl transfer from carboxy-S-adenosyl-L-methionine (Cx-SAM) to 5-hydroxyuridine (ho5U) to form 5-carboxymethoxyuridine (cmo5U) at position 34 in tRNAs. The polypeptide is tRNA U34 carboxymethyltransferase (Salmonella agona (strain SL483)).